The sequence spans 312 residues: Ribosomal RNA small subunit methyltransferase H (312 aa).

S-adenosyl-L-methionine-binding positions include 35-37, Asp-55, Asp-101, and Gln-108; that span reads GGH. A disordered region spans residues 285 to 306; the sequence is ALKPSEHEVTENSRSRSSVLRV. The segment covering 287 to 298 has biased composition (basic and acidic residues); that stretch reads KPSEHEVTENSR.

Belongs to the methyltransferase superfamily. RsmH family.

It localises to the cytoplasm. The enzyme catalyses cytidine(1402) in 16S rRNA + S-adenosyl-L-methionine = N(4)-methylcytidine(1402) in 16S rRNA + S-adenosyl-L-homocysteine + H(+). Specifically methylates the N4 position of cytidine in position 1402 (C1402) of 16S rRNA. In Aeromonas salmonicida (strain A449), this protein is Ribosomal RNA small subunit methyltransferase H.